Reading from the N-terminus, the 1004-residue chain is E3 ubiquitin-protein ligase NEDD4-like (1004 aa).

Residues 30–154 (LASHHSRGLE…TEDPTMERPY (125 aa)) form the C2 domain. Disordered regions lie at residues 207–230 (SNDSASQHQEELPPPPLPPGWEEK) and 272–407 (AAHR…TPSV). The 34-residue stretch at 221 to 254 (PPLPPGWEEKVDNLGRTYYVNHNNRSTQWHRPSL) folds into the WW 1 domain. Ser341 bears the Phosphoserine mark. Thr347 is subject to Phosphothreonine. 2 stretches are compositionally biased toward polar residues: residues 347 to 359 (TPDSNGEQFSSLI) and 366 to 376 (RLRSCSVTDTV). The residue at position 371 (Ser371) is a Phosphoserine; by WNK1 and WNK4. Position 396 is a phosphothreonine; by SGK1 (Thr396). A WW 2 domain is found at 414-447 (PGLPSGWEERKDAKGRTYYVNHNNRTTTWTRPIM). The disordered stretch occupies residues 453–523 (GASGSATNSN…YNSPKPQHKV (71 aa)). Ser475 bears the Phosphoserine mark. At Ser477 the chain carries Phosphoserine; by SGK1. Phosphoserine is present on residues Ser478, Ser493, Ser504, Ser508, Ser512, and Ser516. Positions 489–500 (GAKDSPIRRAVK) are enriched in basic and acidic residues. WW domains lie at 526-559 (SFLPPGWEMRIAPNGRPFFIDHNTKTTTWEDPRL) and 577-610 (GPLPPGWEERIHLDGRTFYIDHNSKITQWEDPRL). The 335-residue stretch at 669–1003 (RPDVLKARLW…VENAQGFEGV (335 aa)) folds into the HECT domain. The active-site Glycyl thioester intermediate is Cys971.

Interacts with UBE2E3. Interacts with NDFIP1; this interaction activates the E3 ubiquitin-protein ligase. Interacts with NDFIP2; this interaction activates the E3 ubiquitin-protein ligase. Interacts (via WW domains) with SCN1A. Interacts (via WW domains) with SCN2A. Interacts (via WW domains) with SCN3A. Interacts (via WW domains) with SCN5A. Interacts (via WW domains) with SCN8A. Interacts (via WW domains) with SCN9A. Interacts (via WW domains) with SCN10A. Interacts (via WW domains) with CLCN5. Interacts with SMAD2. Interacts with SMAD3. Interacts with SMAD6. Interacts with SMAD7. The phosphorylated form interacts with 14-3-3 proteins. Interacts with TNK2. Interacts with WNK1. Interacts with SGK1. Interacts (via C2 domain) with NPC2. Interacts with ARRDC4. Interacts with KCNQ1; promotes internalization of KCNQ1. Interacts (via domains WW1, 3 and 4) with USP36; the interaction inhibits ubiquitination of, at least, NTRK1, KCNQ2 and KCNQ3 by NEDD4L. Interacts with PRRG4 (via cytoplasmic domain). Interacts with LDLRAD3; the interaction is direct. Interacts with UBE2D2. Interacts with TTYH2 and TTYH3. Post-translationally, phosphorylated; which impairs interaction with SCNN. Interaction with YWHAH inhibits dephosphorylation. Aldosterone induces Ser-477 phosphorylation by SGK1. Auto-ubiquitinated. Deubiquitinated by USP36, no effect on NEDD4L protein levels. Both proteins interact and regulate each other's ubiquitination levels. Highly expressed in liver and kidney. Also expressed in heart, brain and lung. Isoform 1 is expressed in kidney, lung and gut. Isoform 3 is ubiquitously expressed.

The protein localises to the cytoplasm. It is found in the golgi apparatus. It localises to the endosome. The protein resides in the multivesicular body. It catalyses the reaction S-ubiquitinyl-[E2 ubiquitin-conjugating enzyme]-L-cysteine + [acceptor protein]-L-lysine = [E2 ubiquitin-conjugating enzyme]-L-cysteine + N(6)-ubiquitinyl-[acceptor protein]-L-lysine.. The catalysed reaction is [E2 ubiquitin-conjugating enzyme]-S-ubiquitinyl-L-cysteine + [acceptor protein]-L-cysteine = [E2 ubiquitin-conjugating enzyme]-L-cysteine + [acceptor protein]-S-ubiquitinyl-L-cysteine.. Its pathway is protein modification; protein ubiquitination. Its activity is regulated as follows. Activated by NDFIP1- and NDFIP2-binding. In terms of biological role, E3 ubiquitin-protein ligase that mediates the polyubiquitination of lysine and cysteine residues on target proteins and is thereby implicated in the regulation of various signaling pathways including autophagy, innate immunity or DNA repair. Inhibits TGF-beta signaling by triggering SMAD2 and TGFBR1 ubiquitination and proteasome-dependent degradation. Downregulates autophagy and cell growth by ubiquitinating and reducing cellular ULK1 or ASCT2 levels. Promotes ubiquitination and internalization of various plasma membrane channels such as ENaC, SCN2A/Nav1.2, SCN3A/Nav1.3, SCN5A/Nav1.5, SCN9A/Nav1.7, SCN10A/Nav1.8, KCNA3/Kv1.3, KCNH2, EAAT1, KCNQ2/Kv7.2, KCNQ3/Kv7.3 or CLC5. Promotes ubiquitination and degradation of SGK1 and TNK2. Ubiquitinates BRAT1 and this ubiquitination is enhanced in the presence of NDFIP1. Plays a role in dendrite formation by melanocytes. Involved in the regulation of TOR signaling. Ubiquitinates and regulates protein levels of NTRK1 once this one is activated by NGF. Plays a role in antiviral innate immunity by catalyzing 'Lys-29'-linked cysteine ubiquitination of TRAF3, resulting in enhanced 'Lys-48' and 'Lys-63'-linked ubiquitination of TRAF3. Ubiquitinates TTYH2 and TYYH3 and regulates protein levels of TTYH2. In Mus musculus (Mouse), this protein is E3 ubiquitin-protein ligase NEDD4-like (Nedd4l).